A 99-amino-acid chain; its full sequence is Putative pterin-4-alpha-carbinolamine dehydratase (99 aa).

The protein belongs to the pterin-4-alpha-carbinolamine dehydratase family.

The enzyme catalyses (4aS,6R)-4a-hydroxy-L-erythro-5,6,7,8-tetrahydrobiopterin = (6R)-L-erythro-6,7-dihydrobiopterin + H2O. In Aquifex aeolicus (strain VF5), this protein is Putative pterin-4-alpha-carbinolamine dehydratase.